A 134-amino-acid polypeptide reads, in one-letter code: Small ribosomal subunit protein bS16 (134 aa).

The interval 79–134 is disordered; sequence AGIAKRPSRNNPTKGEPGKKAQERLALAKQAEEEAAAKAAEAAAAAAAPAEEAASE. Low complexity predominate over residues 115 to 134; the sequence is AKAAEAAAAAAAPAEEAASE.

This sequence belongs to the bacterial ribosomal protein bS16 family.

This Brucella suis (strain ATCC 23445 / NCTC 10510) protein is Small ribosomal subunit protein bS16.